We begin with the raw amino-acid sequence, 34 residues long: Cytochrome b6-f complex subunit 7 (34 aa).

A helical transmembrane segment spans residues 9-27; it reads AILSFGLIFVGWGLGALLL.

It belongs to the PetM family. As to quaternary structure, the 4 large subunits of the cytochrome b6-f complex are cytochrome b6, subunit IV (17 kDa polypeptide, PetD), cytochrome f and the Rieske protein, while the 4 small subunits are PetG, PetL, PetM and PetN. The complex functions as a dimer.

It is found in the cellular thylakoid membrane. Functionally, component of the cytochrome b6-f complex, which mediates electron transfer between photosystem II (PSII) and photosystem I (PSI), cyclic electron flow around PSI, and state transitions. The protein is Cytochrome b6-f complex subunit 7 of Nostoc punctiforme (strain ATCC 29133 / PCC 73102).